Reading from the N-terminus, the 357-residue chain is ATP-dependent 6-phosphofructokinase (357 aa).

Residues Gly12, 80–81, and 107–110 contribute to the ATP site; these read KG and GDGS. A Mg(2+)-binding site is contributed by Asp108. Residues 131–133, Arg168, 175–177, Glu229, Arg272, and 278–281 contribute to the substrate site; these read TID, MGR, and HIQR. Asp133 (proton acceptor) is an active-site residue.

It belongs to the phosphofructokinase type A (PFKA) family. Mixed-substrate PFK group III subfamily. In terms of assembly, homodimer or homotetramer. Mg(2+) is required as a cofactor.

It localises to the cytoplasm. The enzyme catalyses beta-D-fructose 6-phosphate + ATP = beta-D-fructose 1,6-bisphosphate + ADP + H(+). Its pathway is carbohydrate degradation; glycolysis; D-glyceraldehyde 3-phosphate and glycerone phosphate from D-glucose: step 3/4. Subject to allosteric activation by ADP and other diphosphonucleosides, and inhibition by phosphoenolpyruvate. Functionally, catalyzes the phosphorylation of D-fructose 6-phosphate to fructose 1,6-bisphosphate by ATP, the first committing step of glycolysis. This is ATP-dependent 6-phosphofructokinase from Trichormus variabilis (strain ATCC 29413 / PCC 7937) (Anabaena variabilis).